Consider the following 209-residue polypeptide: Ubiquitin-conjugating enzyme E2 S (209 aa).

One can recognise a UBC core domain in the interval 14–160; that stretch reads QTIRQVMREL…ARMMTEIHAQ (147 aa). The active-site Glycyl thioester intermediate is Cys98. Residues 164–209 form a disordered region; that stretch reads CAAGAAGDSKDDDGPSTKKHAGLDKKLQDKKKEKLLKEKKRMLKRL. Residues 171 to 199 show a composition bias toward basic and acidic residues; the sequence is DSKDDDGPSTKKHAGLDKKLQDKKKEKLL. The segment covering 200 to 209 has biased composition (basic residues); that stretch reads KEKKRMLKRL.

This sequence belongs to the ubiquitin-conjugating enzyme family.

The enzyme catalyses S-ubiquitinyl-[E1 ubiquitin-activating enzyme]-L-cysteine + [E2 ubiquitin-conjugating enzyme]-L-cysteine = [E1 ubiquitin-activating enzyme]-L-cysteine + S-ubiquitinyl-[E2 ubiquitin-conjugating enzyme]-L-cysteine.. It functions in the pathway protein modification; protein ubiquitination. In terms of biological role, catalyzes the covalent attachment of ubiquitin to other proteins. Acts as an essential factor of the anaphase promoting complex/cyclosome (APC/C), a cell cycle-regulated ubiquitin ligase that controls progression through mitosis. Acts by specifically elongating polyubiquitin chains initiated by the E2 enzyme vih/UbcH10 on APC/C substrates, enhancing the degradation of APC/C substrates by the proteasome and promoting mitotic exit. This chain is Ubiquitin-conjugating enzyme E2 S, found in Drosophila ananassae (Fruit fly).